Here is a 1367-residue protein sequence, read N- to C-terminus: MEKIENLKWKDVTFESIEIDPDAGVVLVSVEKFSSEVENLVSLLEKETRFRVIVNGAQKSNGDLKGKILSLLNGNVPYIKDVVFEGNRLILKVLGDFARDRIASKLRSTKKQLDELLPPGTEIMFEVVEPPEDLLKKEVPQPEKREEPKGEELKIEDENHIFGQKPRKIVFTPSKIFEYNKKTSVKGKVFKIEKIEGKKTVLLIYLTDGEDSLICKVFNDVEKVEGKISLGDVIVATGDLLLENGEPTLYVKGITKLPEAKRMDNSPVKRVELHAHTKFSDQDAITDVNEYVKRAKEWGFPAVALTDHGNVQAIPYFYDAAKEAGIKPIFGIEAYLVSDVEPVIRNLSYDSSFENATFVVLDFETTGLDPQVDEIIEIGAVKIQDGQIVDEYHTLIKPSREISRRSSEITGITQEMLENKRSIEEVLPEFLGFLENSIIVAHNANFDYRFLRLWIKKVMGLDWERPYIDTLALAKSLLKMRSYSLDSVVEKLGLGPFRHHRALDDARVTAQVFLRFVEMMKKIGITKLSEIENLKDTIDYTALKPFHCTILVQNKKGLKNLYKLVSDSYIKYFYGVPRILKSALIENREGLLVGSACISGELGRAALEGASDSELEEIAKFYDYIEVMPLDVIAEDEEDLDRERLKEVYRRLYRIAKKLNKFVVMTGDVHFLDPEDARGRAALLAPQGNRNFENQPALYLRTTEEMLEKAMEIFEDEEIAREVVIENPNRIADMIEEVQPLEKKLHPPIIENADEIVRSLTMKRAYEIYGDPLPEIVQKRVERELNAIINHGYAVLYLIAQELVQKSMSDGYVVGSRGSVGSSLVANLLGITEVNPLPPHYRCPECKYFKVVEDDRYGAGYDLPDKKCPVCGAPLRKDGHDIPFETFMGFEGDKVPDIDLNFSGEYQERAHRFVEELFGKDHVYRAGTINTIAEKSAVGYVRSYEEKTGKKLRKAEMERLVSMITGVKRTTGQHPGGLMIIPKDKEVYDFTPIQYPANDRNAGVFTTHFAYETIHDDLVKIDALGHDDPTFIKMLKDLTGIDPMTIPMDDPDTLAIFSSVKPLGVDPVELESDVGTYGIPEFGTEFVRGMLVETRPKSFAELVRISGLSHGTDVWLNNARDWINLGYAKLSDVISCRDDIMNFLIHKGMEPSLAFKIMENVRKGKGITEEMESEMRKLKVPEWFIESCKRIKYLFPKAHAVAYVSMAFRIAYFKVHYPLQFYAAYFTIKGDQFDPVLVLKGKEAIKRRLRELKAMTGKDVQKKNEESVLEVVLEMILRGFSFLPPDIFKSDAKKFLIEGNSLRIPFNKLPGLGDSVAESIVRAREEKPFTSVEDLMKRTKVNKNHIELMRSLGVLGSLPETEQFTLF.

One can recognise an Exonuclease domain in the interval 358-513 (FVVLDFETTG…DDARVTAQVF (156 aa)).

This sequence belongs to the DNA polymerase type-C family. PolC subfamily.

It is found in the cytoplasm. It catalyses the reaction DNA(n) + a 2'-deoxyribonucleoside 5'-triphosphate = DNA(n+1) + diphosphate. Its function is as follows. Required for replicative DNA synthesis. This DNA polymerase also exhibits 3' to 5' exonuclease activity. The sequence is that of DNA polymerase III PolC-type from Thermotoga petrophila (strain ATCC BAA-488 / DSM 13995 / JCM 10881 / RKU-1).